A 559-amino-acid chain; its full sequence is Potassium-transporting ATPase potassium-binding subunit (559 aa).

13 helical membrane-spanning segments follow: residues 5–25 (GFLL…PLGS), 27–47 (LARL…RILW), 63–83 (LLAL…LLFW), 132–152 (GLTV…FALI), 170–190 (LVRI…LFFI), 253–273 (LAQM…FGEA), 283–303 (LLWA…WAEV), 327–347 (FGVL…CGAV), 356–376 (ALGG…FGGV), 379–399 (GLYG…LMIG), 416–436 (MTAL…ALAM), 484–504 (LLAF…MAIA), and 524–544 (GALF…LTFI).

It belongs to the KdpA family. In terms of assembly, the system is composed of three essential subunits: KdpA, KdpB and KdpC.

Its subcellular location is the cell inner membrane. Functionally, part of the high-affinity ATP-driven potassium transport (or Kdp) system, which catalyzes the hydrolysis of ATP coupled with the electrogenic transport of potassium into the cytoplasm. This subunit binds the periplasmic potassium ions and delivers the ions to the membrane domain of KdpB through an intramembrane tunnel. This Salmonella heidelberg (strain SL476) protein is Potassium-transporting ATPase potassium-binding subunit.